Consider the following 199-residue polypeptide: Probable adenylyl-sulfate kinase (199 aa).

ATP is bound at residue 34-41; the sequence is GLSGSGKS. The active-site Phosphoserine intermediate is the serine 108.

This sequence belongs to the APS kinase family.

It carries out the reaction adenosine 5'-phosphosulfate + ATP = 3'-phosphoadenylyl sulfate + ADP + H(+). It participates in sulfur metabolism; hydrogen sulfide biosynthesis; sulfite from sulfate: step 2/3. In terms of biological role, catalyzes the synthesis of activated sulfate. The sequence is that of Probable adenylyl-sulfate kinase (yisZ) from Bacillus subtilis (strain 168).